A 199-amino-acid polypeptide reads, in one-letter code: Large ribosomal subunit protein bL25 (199 aa).

The segment at 1 to 21 (MNIEKTLSVQKREGYGKGPSG) is disordered.

It belongs to the bacterial ribosomal protein bL25 family. CTC subfamily. As to quaternary structure, part of the 50S ribosomal subunit; part of the 5S rRNA/L5/L18/L25 subcomplex. Contacts the 5S rRNA. Binds to the 5S rRNA independently of L5 and L18.

This is one of the proteins that binds to the 5S RNA in the ribosome where it forms part of the central protuberance. This Desulfovibrio desulfuricans (strain ATCC 27774 / DSM 6949 / MB) protein is Large ribosomal subunit protein bL25.